The following is a 282-amino-acid chain: MMETAADALASGTVPLEMTQTQIFEAIQGDTLLASSLWINIALAGLSILLFVYMGRNLEDPRAQLIFVATLMVPLVSISSYTGLVSGLTVSFLEMPAGHALAGQEVLTPWGRYLTWALSTPMILVALGLLAGSNATKLFTAVTADIGMCVTGLAAALTTSSYLLRWVWYVISCAFFVVVLYVLLAEWAEDAEVAGTAEIFNTLKLLTVVLWLGYPIFWALGAEGLAVLDVAVTSWAYSGMDIVAKYLFAFLLLRWVVDNERTVAGMAAGLGAPLARCAPADD.

Topologically, residues 1–29 (MMETAADALASGTVPLEMTQTQIFEAIQG) are extracellular. The helical transmembrane segment at 30–55 (DTLLASSLWINIALAGLSILLFVYMG) threads the bilayer. The Cytoplasmic segment spans residues 56–61 (RNLEDP). A helical transmembrane segment spans residues 62–85 (RAQLIFVATLMVPLVSISSYTGLV). Residues 86-109 (SGLTVSFLEMPAGHALAGQEVLTP) lie on the Extracellular side of the membrane. The helical transmembrane segment at 110–131 (WGRYLTWALSTPMILVALGLLA) threads the bilayer. Residues 132–134 (GSN) are Cytoplasmic-facing. The helical transmembrane segment at 135–158 (ATKLFTAVTADIGMCVTGLAAALT) threads the bilayer. Over 159–161 (TSS) the chain is Extracellular. Residues 162–184 (YLLRWVWYVISCAFFVVVLYVLL) form a helical membrane-spanning segment. Residues 185 to 196 (AEWAEDAEVAGT) are Cytoplasmic-facing. The chain crosses the membrane as a helical span at residues 197 to 220 (AEIFNTLKLLTVVLWLGYPIFWAL). At 221 to 229 (GAEGLAVLD) the chain is on the extracellular side. The helical transmembrane segment at 230–258 (VAVTSWAYSGMDIVAKYLFAFLLLRWVVD) threads the bilayer. N6-(retinylidene)lysine is present on K245. Topologically, residues 259-282 (NERTVAGMAAGLGAPLARCAPADD) are cytoplasmic.

The protein belongs to the archaeal/bacterial/fungal opsin family.

It is found in the cell membrane. Its function is as follows. Light-driven chloride pump. In Halorubrum sodomense, this protein is Halorhodopsin (hop).